A 333-amino-acid chain; its full sequence is Ribosomal RNA small subunit methyltransferase H (333 aa).

Residues Gly-42 to His-44, Asp-62, Phe-86, Asp-105, and Gln-112 each bind S-adenosyl-L-methionine.

This sequence belongs to the methyltransferase superfamily. RsmH family.

Its subcellular location is the cytoplasm. It catalyses the reaction cytidine(1402) in 16S rRNA + S-adenosyl-L-methionine = N(4)-methylcytidine(1402) in 16S rRNA + S-adenosyl-L-homocysteine + H(+). In terms of biological role, specifically methylates the N4 position of cytidine in position 1402 (C1402) of 16S rRNA. This chain is Ribosomal RNA small subunit methyltransferase H, found in Cupriavidus necator (strain ATCC 17699 / DSM 428 / KCTC 22496 / NCIMB 10442 / H16 / Stanier 337) (Ralstonia eutropha).